The following is a 269-amino-acid chain: Probable ribosomal RNA small subunit methyltransferase A (269 aa).

Residues H19, L21, G46, E67, D92, and N107 each coordinate S-adenosyl-L-methionine.

This sequence belongs to the class I-like SAM-binding methyltransferase superfamily. rRNA adenine N(6)-methyltransferase family. RsmA subfamily.

Its subcellular location is the cytoplasm. Specifically dimethylates two adjacent adenosines in the loop of a conserved hairpin near the 3'-end of 16S rRNA in the 30S particle. May play a critical role in biogenesis of 30S subunits. The chain is Probable ribosomal RNA small subunit methyltransferase A from Methanosarcina acetivorans (strain ATCC 35395 / DSM 2834 / JCM 12185 / C2A).